A 484-amino-acid chain; its full sequence is Aspartyl/glutamyl-tRNA(Asn/Gln) amidotransferase subunit B (484 aa).

This sequence belongs to the GatB/GatE family. GatB subfamily. In terms of assembly, heterotrimer of A, B and C subunits.

The enzyme catalyses L-glutamyl-tRNA(Gln) + L-glutamine + ATP + H2O = L-glutaminyl-tRNA(Gln) + L-glutamate + ADP + phosphate + H(+). It catalyses the reaction L-aspartyl-tRNA(Asn) + L-glutamine + ATP + H2O = L-asparaginyl-tRNA(Asn) + L-glutamate + ADP + phosphate + 2 H(+). In terms of biological role, allows the formation of correctly charged Asn-tRNA(Asn) or Gln-tRNA(Gln) through the transamidation of misacylated Asp-tRNA(Asn) or Glu-tRNA(Gln) in organisms which lack either or both of asparaginyl-tRNA or glutaminyl-tRNA synthetases. The reaction takes place in the presence of glutamine and ATP through an activated phospho-Asp-tRNA(Asn) or phospho-Glu-tRNA(Gln). In Cupriavidus metallidurans (strain ATCC 43123 / DSM 2839 / NBRC 102507 / CH34) (Ralstonia metallidurans), this protein is Aspartyl/glutamyl-tRNA(Asn/Gln) amidotransferase subunit B.